Reading from the N-terminus, the 179-residue chain is Probable chorismate pyruvate-lyase (179 aa).

Positions 82, 120, and 165 each coordinate substrate.

The protein belongs to the UbiC family.

The protein resides in the cytoplasm. The enzyme catalyses chorismate = 4-hydroxybenzoate + pyruvate. It functions in the pathway cofactor biosynthesis; ubiquinone biosynthesis. Functionally, removes the pyruvyl group from chorismate, with concomitant aromatization of the ring, to provide 4-hydroxybenzoate (4HB) for the ubiquinone pathway. This is Probable chorismate pyruvate-lyase from Vibrio parahaemolyticus serotype O3:K6 (strain RIMD 2210633).